A 363-amino-acid polypeptide reads, in one-letter code: Histidinol-phosphate aminotransferase (363 aa).

Lys218 bears the N6-(pyridoxal phosphate)lysine mark.

Belongs to the class-II pyridoxal-phosphate-dependent aminotransferase family. Histidinol-phosphate aminotransferase subfamily. In terms of assembly, homodimer. Pyridoxal 5'-phosphate is required as a cofactor.

It carries out the reaction L-histidinol phosphate + 2-oxoglutarate = 3-(imidazol-4-yl)-2-oxopropyl phosphate + L-glutamate. Its pathway is amino-acid biosynthesis; L-histidine biosynthesis; L-histidine from 5-phospho-alpha-D-ribose 1-diphosphate: step 7/9. This chain is Histidinol-phosphate aminotransferase, found in Xanthomonas euvesicatoria pv. vesicatoria (strain 85-10) (Xanthomonas campestris pv. vesicatoria).